The following is a 212-amino-acid chain: tRNA (guanine-N(7)-)-methyltransferase (212 aa).

S-adenosyl-L-methionine is bound by residues Glu44, Asp69, Asp96, and Asp118. Asp118 is a catalytic residue. Residue Lys122 coordinates substrate. The tract at residues 124–129 (RHEKRR) is interaction with RNA. Substrate is bound by residues Asp154 and 191-194 (TEYE).

It belongs to the class I-like SAM-binding methyltransferase superfamily. TrmB family.

It catalyses the reaction guanosine(46) in tRNA + S-adenosyl-L-methionine = N(7)-methylguanosine(46) in tRNA + S-adenosyl-L-homocysteine. The protein operates within tRNA modification; N(7)-methylguanine-tRNA biosynthesis. In terms of biological role, catalyzes the formation of N(7)-methylguanine at position 46 (m7G46) in tRNA. This chain is tRNA (guanine-N(7)-)-methyltransferase, found in Streptococcus sanguinis (strain SK36).